A 119-amino-acid polypeptide reads, in one-letter code: Large ribosomal subunit protein uL18 (119 aa).

Belongs to the universal ribosomal protein uL18 family. As to quaternary structure, part of the 50S ribosomal subunit; part of the 5S rRNA/L5/L18/L25 subcomplex. Contacts the 5S and 23S rRNAs.

This is one of the proteins that bind and probably mediate the attachment of the 5S RNA into the large ribosomal subunit, where it forms part of the central protuberance. The polypeptide is Large ribosomal subunit protein uL18 (Desulfovibrio desulfuricans (strain ATCC 27774 / DSM 6949 / MB)).